We begin with the raw amino-acid sequence, 222 residues long: NADH dehydrogenase [ubiquinone] iron-sulfur protein 8-A, mitochondrial (222 aa).

2 4Fe-4S ferredoxin-type domains span residues 114 to 143 (RRYP…IEAE) and 153 to 182 (TRYD…EGPN). [4Fe-4S] cluster contacts are provided by cysteine 123, cysteine 126, cysteine 129, cysteine 133, cysteine 162, cysteine 165, cysteine 168, and cysteine 172.

It belongs to the complex I 23 kDa subunit family. As to quaternary structure, complex I is composed of at least 49 different subunits. This is a component of the iron-sulfur (IP) fragment of the enzyme. [4Fe-4S] cluster serves as cofactor.

The protein localises to the mitochondrion. The catalysed reaction is a ubiquinone + NADH + 5 H(+)(in) = a ubiquinol + NAD(+) + 4 H(+)(out). Core subunit of the mitochondrial membrane respiratory chain NADH dehydrogenase (Complex I) that is believed to belong to the minimal assembly required for catalysis. Complex I functions in the transfer of electrons from NADH to the respiratory chain. The immediate electron acceptor for the enzyme is believed to be ubiquinone. May donate electrons to ubiquinone. The protein is NADH dehydrogenase [ubiquinone] iron-sulfur protein 8-A, mitochondrial of Arabidopsis thaliana (Mouse-ear cress).